We begin with the raw amino-acid sequence, 134 residues long: Large-conductance mechanosensitive channel (134 aa).

The next 2 membrane-spanning stretches (helical) occupy residues 16-36 (VVDMAVGIIIGVAFGKIVSSF) and 76-96 (GVFLQAIFDFIIIAFAIFIAV).

Belongs to the MscL family. In terms of assembly, homopentamer.

It is found in the cell inner membrane. Functionally, channel that opens in response to stretch forces in the membrane lipid bilayer. May participate in the regulation of osmotic pressure changes within the cell. The sequence is that of Large-conductance mechanosensitive channel from Thioalkalivibrio sulfidiphilus (strain HL-EbGR7).